The sequence spans 118 residues: Large ribosomal subunit protein bL19 (118 aa).

Belongs to the bacterial ribosomal protein bL19 family.

Functionally, this protein is located at the 30S-50S ribosomal subunit interface and may play a role in the structure and function of the aminoacyl-tRNA binding site. In Citrifermentans bemidjiense (strain ATCC BAA-1014 / DSM 16622 / JCM 12645 / Bem) (Geobacter bemidjiensis), this protein is Large ribosomal subunit protein bL19.